The chain runs to 362 residues: H-2 class I histocompatibility antigen, D-K alpha chain (362 aa).

Residues 1-24 (MGAMVPRTLLLLLAAALAPAQTRA) form the signal peptide. The interval 25-114 (GPHSLRYFET…LLRYYNQSEG (90 aa)) is alpha-1. Topologically, residues 25–306 (GPHSLRYFET…RWEPPPSTDS (282 aa)) are extracellular. The N-linked (GlcNAc...) asparagine glycan is linked to Asn110. The segment at 115–206 (GSHTIQRLSG…ELGNATLLHT (92 aa)) is alpha-2. An intrachain disulfide couples Cys125 to Cys188. N-linked (GlcNAc...) asparagine glycans are attached at residues Asn200 and Asn280. Residues 207–298 (DSPKAHVTHH…GLPEPLTLRW (92 aa)) are alpha-3. Positions 209–297 (PKAHVTHHPR…EGLPEPLTLR (89 aa)) constitute an Ig-like C1-type domain. Cys227 and Cys283 are oxidised to a cystine. The segment at 299–306 (EPPPSTDS) is connecting peptide. The chain crosses the membrane as a helical span at residues 307–333 (YMVIVAVLGVLGAVAIIGAVVAFVMMM). The Cytoplasmic portion of the chain corresponds to 334–362 (RRNTGGKGGDYTLTPGSQSSEMSLPDCKA). Residues 340 to 362 (KGGDYTLTPGSQSSEMSLPDCKA) are disordered. A phosphoserine mark is found at Ser353 and Ser356.

The protein belongs to the MHC class I family. As to quaternary structure, heterodimer of an alpha chain and a beta chain (beta-2-microglobulin). Post-translationally, polyubiquitinated in case of infection by murid herpesvirus 4, by the viral E3 ligase K3 (mK3), leading to target the protein for rapid degradation by the endoplasmic reticulum-associated degradation (ERAD) system. Ubiquitination takes place on lysine, as well as serine and threonine residues present in the cytoplasmic tail. Hydroxylated serine and threonine residues in the cytoplasmic tail are subject to ubiquitination via ester bonds instead of the classical isopeptide linkage. In terms of processing, hydroxylation of residues in the cytoplasmic tail.

The protein resides in the membrane. Functionally, involved in the presentation of foreign antigens to the immune system. The chain is H-2 class I histocompatibility antigen, D-K alpha chain (H2-D1) from Mus musculus (Mouse).